Reading from the N-terminus, the 254-residue chain is MRKMFLAGNWKMHYTSVEAAGVAKQIVDGVQNINDDVVIMITPAFTSLCKVCEVTKGSNVLLGAQNMSYENSGARTSEISPSMLLEFGVDYVILGHSECRTYLGDTDEVINKKILAGLKHPFKYLILCIGETLSERENNKTLDVVLNQIRRGLMSVSESDLKRIILAYEPVWAIGTGKTATKEEAQEVHRAIRLEIESLYSTSAADDIIIQYGGSVNVDNVGGLMGENDIDGALIGGASLKADSFLNIVNKVAK.

Substrate is bound at residue 9-11; sequence NWK. His-96 (electrophile) is an active-site residue. Residue Glu-169 is the Proton acceptor of the active site. Substrate contacts are provided by residues Gly-175, Ser-215, and 236-237; that span reads GG.

It belongs to the triosephosphate isomerase family. Homodimer.

The protein localises to the cytoplasm. The catalysed reaction is D-glyceraldehyde 3-phosphate = dihydroxyacetone phosphate. Its pathway is carbohydrate biosynthesis; gluconeogenesis. It participates in carbohydrate degradation; glycolysis; D-glyceraldehyde 3-phosphate from glycerone phosphate: step 1/1. In terms of biological role, involved in the gluconeogenesis. Catalyzes stereospecifically the conversion of dihydroxyacetone phosphate (DHAP) to D-glyceraldehyde-3-phosphate (G3P). The chain is Triosephosphate isomerase from Borrelia hermsii (strain HS1 / DAH).